The sequence spans 152 residues: Xanthine-guanine phosphoribosyltransferase (152 aa).

5-phospho-alpha-D-ribose 1-diphosphate-binding positions include 37–38, Arg69, and 88–96; these read RG and DDLVDTGGT. Arg69 is a GMP binding site. Asp89 serves as a coordination point for Mg(2+). Guanine is bound by residues Asp92 and Ile135. Xanthine is bound by residues Asp92 and Ile135. GMP contacts are provided by residues 92–96 and 134–135; these read DTGGT and WI.

This sequence belongs to the purine/pyrimidine phosphoribosyltransferase family. XGPT subfamily. Homotetramer. The cofactor is Mg(2+).

It localises to the cell inner membrane. It carries out the reaction GMP + diphosphate = guanine + 5-phospho-alpha-D-ribose 1-diphosphate. The enzyme catalyses XMP + diphosphate = xanthine + 5-phospho-alpha-D-ribose 1-diphosphate. The catalysed reaction is IMP + diphosphate = hypoxanthine + 5-phospho-alpha-D-ribose 1-diphosphate. It participates in purine metabolism; GMP biosynthesis via salvage pathway; GMP from guanine: step 1/1. Its pathway is purine metabolism; XMP biosynthesis via salvage pathway; XMP from xanthine: step 1/1. Purine salvage pathway enzyme that catalyzes the transfer of the ribosyl-5-phosphate group from 5-phospho-alpha-D-ribose 1-diphosphate (PRPP) to the N9 position of the 6-oxopurines guanine and xanthine to form the corresponding ribonucleotides GMP (guanosine 5'-monophosphate) and XMP (xanthosine 5'-monophosphate), with the release of PPi. To a lesser extent, also acts on hypoxanthine. This chain is Xanthine-guanine phosphoribosyltransferase, found in Escherichia fergusonii (strain ATCC 35469 / DSM 13698 / CCUG 18766 / IAM 14443 / JCM 21226 / LMG 7866 / NBRC 102419 / NCTC 12128 / CDC 0568-73).